The primary structure comprises 568 residues: 4-hydroxy-7-methoxy-3-oxo-3,4-dihydro-2H-1,4-benzoxazin-2-yl glucoside beta-D-glucosidase, chloroplastic (568 aa).

The N-terminal 50 residues, 1–50 (MALLVGGTLNPTTHLSLRSRAGRNSENVWLRSAASSQTSKGRFCNLTVRA), are a transit peptide targeting the chloroplast. Residues Q92, H194, and 239-240 (NE) each bind a beta-D-glucoside. The active-site Proton donor is E240. C259 and C265 are joined by a disulfide. A beta-D-glucoside-binding positions include Y383, E456, W504, 511-512 (EW), and F520. E456 (nucleophile) is an active-site residue.

The protein belongs to the glycosyl hydrolase 1 family. Homohexamer. In terms of tissue distribution, expressed in seedlings, mesocotyl, coleoptile, leaf sheath, and roots.

The protein localises to the plastid. Its subcellular location is the chloroplast. The catalysed reaction is DIMBOA beta-D-glucoside + H2O = DIMBOA + D-glucose. It catalyses the reaction DIBOA beta-D-glucoside + H2O = DIBOA + D-glucose. It carries out the reaction Hydrolysis of terminal, non-reducing beta-D-glucosyl residues with release of beta-D-glucose.. With respect to regulation, inhibited by castanospermine, Ag(+) and Cu(2+). 34% inhibition by Zn(2+) and not affected by EDTA. In terms of biological role, involved in defense of young plant parts against pests via the production of benzoxazolinones (hydroxamic acids) from hydroxamic acid glucosides. The preferred substrate is DIBOA-beta-D-glucoside. Can also use esculin and genistein glucoside as substrates, but no activity with salicin, p-nitrophenyl-alpha-glucoside or substrates related to cell wall components. The protein is 4-hydroxy-7-methoxy-3-oxo-3,4-dihydro-2H-1,4-benzoxazin-2-yl glucoside beta-D-glucosidase, chloroplastic of Secale cereale (Rye).